A 658-amino-acid polypeptide reads, in one-letter code: Threonine--tRNA ligase (658 aa).

A TGS domain is found at 1–64 (MSCSVSLSFP…GQSGQIEIIT (64 aa)). Positions 246–549 (DHRRLGREMD…LIENFAGHMP (304 aa)) are catalytic. Positions 343, 394, and 526 each coordinate Zn(2+).

It belongs to the class-II aminoacyl-tRNA synthetase family. In terms of assembly, homodimer. It depends on Zn(2+) as a cofactor.

It localises to the cytoplasm. It carries out the reaction tRNA(Thr) + L-threonine + ATP = L-threonyl-tRNA(Thr) + AMP + diphosphate + H(+). In terms of biological role, catalyzes the attachment of threonine to tRNA(Thr) in a two-step reaction: L-threonine is first activated by ATP to form Thr-AMP and then transferred to the acceptor end of tRNA(Thr). Also edits incorrectly charged L-seryl-tRNA(Thr). This Bartonella quintana (strain Toulouse) (Rochalimaea quintana) protein is Threonine--tRNA ligase.